Here is an 85-residue protein sequence, read N- to C-terminus: Large ribosomal subunit protein bL27 (85 aa).

Positions 1–21 (MAHKKGVGSTRNGRDSESKRL) are disordered.

Belongs to the bacterial ribosomal protein bL27 family.

This Geobacter sulfurreducens (strain ATCC 51573 / DSM 12127 / PCA) protein is Large ribosomal subunit protein bL27.